Here is a 371-residue protein sequence, read N- to C-terminus: Carbamoyl phosphate synthase small chain (371 aa).

The CPSase stretch occupies residues 1–186; the sequence is MDYYNNDTPG…IHQGKTGDVV (186 aa). L-glutamine is bound by residues serine 52, glycine 233, and glycine 235. The region spanning 185–371 is the Glutamine amidotransferase type-1 domain; the sequence is VVVVVDCGIK…KFKKMVVGDA (187 aa). Cysteine 261 functions as the Nucleophile in the catalytic mechanism. 5 residues coordinate L-glutamine: leucine 262, glutamine 265, asparagine 303, glycine 305, and tyrosine 306. Residues histidine 346 and glutamate 348 contribute to the active site.

It belongs to the CarA family. As to quaternary structure, composed of two chains; the small (or glutamine) chain promotes the hydrolysis of glutamine to ammonia, which is used by the large (or ammonia) chain to synthesize carbamoyl phosphate. Tetramer of heterodimers (alpha,beta)4.

The enzyme catalyses hydrogencarbonate + L-glutamine + 2 ATP + H2O = carbamoyl phosphate + L-glutamate + 2 ADP + phosphate + 2 H(+). It carries out the reaction L-glutamine + H2O = L-glutamate + NH4(+). The protein operates within amino-acid biosynthesis; L-arginine biosynthesis; carbamoyl phosphate from bicarbonate: step 1/1. It functions in the pathway pyrimidine metabolism; UMP biosynthesis via de novo pathway; (S)-dihydroorotate from bicarbonate: step 1/3. In terms of biological role, small subunit of the glutamine-dependent carbamoyl phosphate synthetase (CPSase). CPSase catalyzes the formation of carbamoyl phosphate from the ammonia moiety of glutamine, carbonate, and phosphate donated by ATP, constituting the first step of 2 biosynthetic pathways, one leading to arginine and/or urea and the other to pyrimidine nucleotides. The small subunit (glutamine amidotransferase) binds and cleaves glutamine to supply the large subunit with the substrate ammonia. In Sulfolobus acidocaldarius (strain ATCC 33909 / DSM 639 / JCM 8929 / NBRC 15157 / NCIMB 11770), this protein is Carbamoyl phosphate synthase small chain.